A 437-amino-acid polypeptide reads, in one-letter code: ATP-dependent protease ATPase subunit HslU (437 aa).

ATP contacts are provided by residues Ile18, 60–65 (GVGKTE), Asp250, Glu315, and Arg387.

It belongs to the ClpX chaperone family. HslU subfamily. As to quaternary structure, a double ring-shaped homohexamer of HslV is capped on each side by a ring-shaped HslU homohexamer. The assembly of the HslU/HslV complex is dependent on binding of ATP.

The protein resides in the cytoplasm. ATPase subunit of a proteasome-like degradation complex; this subunit has chaperone activity. The binding of ATP and its subsequent hydrolysis by HslU are essential for unfolding of protein substrates subsequently hydrolyzed by HslV. HslU recognizes the N-terminal part of its protein substrates and unfolds these before they are guided to HslV for hydrolysis. This chain is ATP-dependent protease ATPase subunit HslU, found in Dinoroseobacter shibae (strain DSM 16493 / NCIMB 14021 / DFL 12).